Reading from the N-terminus, the 391-residue chain is Phosphoglycerate kinase (391 aa).

Substrate is bound by residues 21-23 (DLN), R36, 59-62 (HLGR), R113, and R146. ATP-binding positions include K197, E319, and 345 to 348 (GGDT).

This sequence belongs to the phosphoglycerate kinase family. In terms of assembly, monomer.

The protein resides in the cytoplasm. The enzyme catalyses (2R)-3-phosphoglycerate + ATP = (2R)-3-phospho-glyceroyl phosphate + ADP. It participates in carbohydrate degradation; glycolysis; pyruvate from D-glyceraldehyde 3-phosphate: step 2/5. The sequence is that of Phosphoglycerate kinase from Shewanella frigidimarina (strain NCIMB 400).